The sequence spans 279 residues: Oxygen-dependent coproporphyrinogen-III oxidase (279 aa).

Substrate is bound at residue Ser-102. A divalent metal cation-binding residues include His-106 and His-116. His-116 functions as the Proton donor in the catalytic mechanism. 118–120 contacts substrate; that stretch reads NTR. The a divalent metal cation site is built by His-149 and His-179. The segment at 244-279 is important for dimerization; it reads YVEFNLLYDRGTKFGLMTDGNVEAILMSLPPEVKWA.

Belongs to the aerobic coproporphyrinogen-III oxidase family. As to quaternary structure, homodimer. It depends on a divalent metal cation as a cofactor.

It localises to the cytoplasm. The enzyme catalyses coproporphyrinogen III + O2 + 2 H(+) = protoporphyrinogen IX + 2 CO2 + 2 H2O. The protein operates within porphyrin-containing compound metabolism; protoporphyrin-IX biosynthesis; protoporphyrinogen-IX from coproporphyrinogen-III (O2 route): step 1/1. Functionally, involved in the heme biosynthesis. Catalyzes the aerobic oxidative decarboxylation of propionate groups of rings A and B of coproporphyrinogen-III to yield the vinyl groups in protoporphyrinogen-IX. The polypeptide is Oxygen-dependent coproporphyrinogen-III oxidase (Rickettsia bellii (strain RML369-C)).